The chain runs to 212 residues: Large ribosomal subunit protein bL25 (212 aa).

The interval 179 to 212 is disordered; sequence EPEEEELPEDDEAAAEGEDAAAGEEAEAPAESED.

It belongs to the bacterial ribosomal protein bL25 family. CTC subfamily. In terms of assembly, part of the 50S ribosomal subunit; part of the 5S rRNA/L5/L18/L25 subcomplex. Contacts the 5S rRNA. Binds to the 5S rRNA independently of L5 and L18.

Its function is as follows. This is one of the proteins that binds to the 5S RNA in the ribosome where it forms part of the central protuberance. This chain is Large ribosomal subunit protein bL25, found in Corynebacterium urealyticum (strain ATCC 43042 / DSM 7109).